A 312-amino-acid chain; its full sequence is Dehydrin CAS31 (312 aa).

Disordered regions lie at residues 1–88 (MSQY…HTGG) and 248–287 (GTEQNTYGTGTGTGHGTTGYGSTGTGHGTTGYGDEQHHGE). Residues 21–30 (PLTSQGQVDQ) show a composition bias toward polar residues. Residues 35–46 (ISGGGMTGATGH) are compositionally biased toward gly residues. Residues 55–66 (HGVGVDQTTGFG) are compositionally biased toward low complexity. Composition is skewed to gly residues over residues 67-88 (SNTGTGTGYGTHTGSGGTHTGG) and 256-278 (TGTGTGHGTTGYGSTGTGHGTTG).

This sequence belongs to the plant dehydrin family. In terms of assembly, interacts with the leghemoglobin LB120-1 in the cytoplasm; this interaction leads to LB120-1 protection from denaturation under thermal and drought stresses. In terms of tissue distribution, expressed in nodules and roots.

Its subcellular location is the cytoplasm. Its function is as follows. Intrinsically disordered protein acting as a chaperone. Ensures leghemoglobins (e.g. LB120-1) protection from denaturation under thermal and drought stresses to delay root nodule nitrogenase inactivation and subsequent nodule senescence, thus supporting symbiotic nitrogen fixation (SNF). The chain is Dehydrin CAS31 from Medicago truncatula (Barrel medic).